Here is a 533-residue protein sequence, read N- to C-terminus: Lymphocyte cytosolic protein 2 (533 aa).

The SAM domain occupies 12 to 78 (VLAWNSDNLA…SQDINKNEER (67 aa)). Y23 carries the phosphotyrosine modification. Disordered stretches follow at residues 78 to 359 (RRSI…PLAH) and 374 to 419 (SASL…TPLD). Residues 94 to 144 (ETESHEEDDGGWSSFEDDYESPNDDDPDGEDDGDYESPNEEEQALVDDAAD) show a composition bias toward acidic residues. Residues 151–172 (NNEEALQSSILPPNSFHNTNSM) are compositionally biased toward polar residues. The segment covering 186–201 (PPVPPLRPKPALPPLP) has biased composition (pro residues). Residues S207 and S210 each carry the phosphoserine modification. Polar residues predominate over residues 340–354 (NTFPSRSVQPSSKNT). Residues S376 and S410 each carry the phosphoserine modification. Residues 400–411 (LPVPNRPQPPSP) show a composition bias toward pro residues. One can recognise an SH2 domain in the interval 422 to 530 (WYVSYITRPE…RYQCTLTHAA (109 aa)).

In terms of assembly, interacts with SLA. Interacts with CBLB. Interacts with GRB2. Interacts with SHB. Interacts with PRAM1. Interacts (via SH2 domain) with CD6 (via tyrosine phosphorylated C-terminus). Interacts with FYB1 and the phosphorylated form of FYB2. Interacts with 14-3-3 adapter/YWHAZ; this phosphorylation leads to YWHAZ proteolytic degradation. Interacts with VAV1; this interaction plays a role in TCR-mediated cytokine production. Interacts with AGER; this interaction plays an important role in AGER-mediated pro-inflammatory responses and cytokine release. Post-translationally, phosphorylated after T-cell receptor activation by ZAP70, ITK and TXK, which leads to the up-regulation of Th1 preferred cytokine IL-2. SYK-dependent phosphorylation is required for recruitment of PI3K signaling components. As to expression, highly expressed in spleen, thymus, and peripheral blood leukocytes.

It localises to the cytoplasm. In terms of biological role, adapter protein primarily involved in signaling pathways within T-cells, as well as other immune cells such as platelets, mast cells, and natural killer (NK) cells. Plays a crucial role for transducing signal from the T-cell receptor (TCR) after antigen recognition leading to T-cell activation. Mechanistically, once phosphorylated by the kinase ZAP70, mediates interactions with the guanine-nucleotide exchange factor VAV1, the adapter protein NCK and the kinase ITK. In turn, stimulates the activation of PKC-theta/PRKCQ and NF-kappa-B transcriptional activity in response to CD3 and CD28 costimulation. Also plays an essential role in AGER-induced signaling pathways including p38 MAPK and ERK1/2 activation leading to cytokine release and pro-inflammatory responses. The sequence is that of Lymphocyte cytosolic protein 2 (Lcp2) from Mus musculus (Mouse).